Consider the following 301-residue polypeptide: Probable alpha-L-glutamate ligase (301 aa).

The region spanning L104–E287 is the ATP-grasp domain. ATP contacts are provided by residues K141, E178–Y179, D187, and R211–N213. 3 residues coordinate Mg(2+): D248, E260, and N262. Residues D248, E260, and N262 each coordinate Mn(2+).

Belongs to the RimK family. It depends on Mg(2+) as a cofactor. Requires Mn(2+) as cofactor.

The chain is Probable alpha-L-glutamate ligase from Marinomonas sp. (strain MWYL1).